The sequence spans 294 residues: Protease HtpX homolog 2 (294 aa).

2 helical membrane-spanning segments follow: residues 15 to 35 and 37 to 57; these read MLFT…FLSY and GTPP…QYFY. Histidine 140 lines the Zn(2+) pocket. The active site involves glutamate 141. Position 144 (histidine 144) interacts with Zn(2+). Transmembrane regions (helical) follow at residues 151–171 and 185–205; these read AVLT…RYSL and GGIL…FLLI. Glutamate 213 serves as a coordination point for Zn(2+).

Belongs to the peptidase M48B family. Requires Zn(2+) as cofactor.

The protein localises to the cell membrane. The polypeptide is Protease HtpX homolog 2 (Methanosarcina acetivorans (strain ATCC 35395 / DSM 2834 / JCM 12185 / C2A)).